Here is a 194-residue protein sequence, read N- to C-terminus: Protein PHLOEM PROTEIN 2-LIKE A2 (194 aa).

A helical membrane pass occupies residues 49-71 (VTFVFFCFFKISLNSAYLYTLYS).

In terms of tissue distribution, vascular tissues, specifically in phloem companion cell-sieve element complexes.

The protein localises to the membrane. The polypeptide is Protein PHLOEM PROTEIN 2-LIKE A2 (PP2A2) (Arabidopsis thaliana (Mouse-ear cress)).